A 485-amino-acid chain; its full sequence is Taxane 13-alpha-hydroxylase (485 aa).

C431 provides a ligand contact to heme.

This sequence belongs to the cytochrome P450 family. It depends on heme as a cofactor.

The enzyme catalyses taxa-4(20),11-dien-5alpha-ol + reduced [NADPH--hemoprotein reductase] + O2 = taxa-4(20),11-dien-5alpha,13alpha-diol + oxidized [NADPH--hemoprotein reductase] + H2O + H(+). Its pathway is alkaloid biosynthesis; taxol biosynthesis. Functionally, involved in the transformation of a taxadienyl acetate by hydroxylation at C13 to yield taxadien-5-alpha-acetoxy-13-alpha-ol. This chain is Taxane 13-alpha-hydroxylase (CYP725A2), found in Taxus cuspidata (Japanese yew).